The sequence spans 268 residues: tRNA pseudouridine synthase A (268 aa).

Asp52 serves as the catalytic Nucleophile. Tyr113 is a substrate binding site.

This sequence belongs to the tRNA pseudouridine synthase TruA family. As to quaternary structure, homodimer.

It catalyses the reaction uridine(38/39/40) in tRNA = pseudouridine(38/39/40) in tRNA. Functionally, formation of pseudouridine at positions 38, 39 and 40 in the anticodon stem and loop of transfer RNAs. The polypeptide is tRNA pseudouridine synthase A (Rhizobium leguminosarum bv. trifolii (strain WSM2304)).